Here is a 31-residue protein sequence, read N- to C-terminus: Nemertide alpha-2 (31 aa).

Intrachain disulfides connect C2-C16, C9-C20, and C15-C26. 4-hydroxyproline is present on residues P28 and P29.

It belongs to the nemertide family. In terms of tissue distribution, confined to the epidermis and to the mucus layer.

The protein localises to the secreted. In terms of biological role, toxin with similar potency against both insect and mammalian sodium channels (Nav). Delays the inactivation of most Nav channels tested (B.germanica (BgNav1); EC(50)=87.2 nM, human Nav1.1/SCN1A; EC(50)=125.8 nM, rat Nav1.2/SCN2A; EC(50)=97.9 nM, rat Nav1.3/SCN3A; EC(50)=127.7 nM, rat Nav1.4/SCN4A; EC(50)=1150.3 nM, human Nav1.5/SCN5A; EC(50)=149.2 nM, mouse Nav1.6/SCN8A; EC(50)=1361.8 nM, human Nav1.9/SCN9A; EC(50)=1296.7 nM). Inactivation is completely prevented by a concentration of 1 uM, resulting in sustained, non-inactivating current. In addition, the toxin significantly enhances the recovery from inactivation, and the open state is not required for the toxin to interact with the channel. In vivo, injection into brine shrimp (Artemia salina) stops movement or causes death after 24 hours (EC(50)=2.9 uM). This Lineus longissimus (Bootlace worm) protein is Nemertide alpha-2.